We begin with the raw amino-acid sequence, 247 residues long: Probable transcriptional regulatory protein GSU1074 (247 aa).

This sequence belongs to the TACO1 family.

The protein localises to the cytoplasm. This chain is Probable transcriptional regulatory protein GSU1074, found in Geobacter sulfurreducens (strain ATCC 51573 / DSM 12127 / PCA).